Here is a 471-residue protein sequence, read N- to C-terminus: Proline and serine-rich protein 2 (471 aa).

Disordered regions lie at residues 1 to 46 (MPGN…SFTM) and 82 to 247 (CDSG…GDHV). The span at 26–43 (LSRGGSLESRCSSSRSRS) shows a compositional bias: low complexity. Residue S43 is modified to Phosphoserine. Phosphothreonine is present on T45. Positions 90–101 (SPQSLEESPSSH) are enriched in low complexity. Residues 154–177 (LPPPDSRGPEVFPLPPSLPVPAPS) are compositionally biased toward pro residues. Residues S187, S220, and S223 each carry the phosphoserine modification. R263 is modified (asymmetric dimethylarginine; alternate). Omega-N-methylarginine; alternate is present on R263. 2 disordered regions span residues 310-365 (DTSS…TEQP) and 383-437 (PSSF…RAVG). A compositionally biased stretch (basic and acidic residues) spans 313 to 324 (SEERWQKAEEQR). Polar residues-rich tracts occupy residues 354 to 364 (AQQSRAVQTEQ) and 383 to 393 (PSSFVPTSKTI). Basic and acidic residues predominate over residues 415 to 427 (YEPRPDGSQDARK). S431 is subject to Phosphoserine. The residue at position 450 (R450) is an Omega-N-methylarginine.

The protein is Proline and serine-rich protein 2 (Proser2) of Mus musculus (Mouse).